We begin with the raw amino-acid sequence, 234 residues long: Adenosine 5'-phosphosulfate reductase (234 aa).

[4Fe-4S] cluster contacts are provided by C120, C121, C203, and C206. Residue C229 is the Nucleophile; cysteine thiosulfonate intermediate of the active site.

The protein belongs to the PAPS reductase family. CysH subfamily. Requires [4Fe-4S] cluster as cofactor.

It is found in the cytoplasm. The enzyme catalyses [thioredoxin]-disulfide + sulfite + AMP + 2 H(+) = adenosine 5'-phosphosulfate + [thioredoxin]-dithiol. It functions in the pathway sulfur metabolism; hydrogen sulfide biosynthesis; sulfite from sulfate. Catalyzes the formation of sulfite from adenosine 5'-phosphosulfate (APS) using thioredoxin as an electron donor. The sequence is that of Adenosine 5'-phosphosulfate reductase from Bacillus cereus (strain AH820).